We begin with the raw amino-acid sequence, 312 residues long: Plasma membrane-associated coenzyme Q6 reductase PGA3 (312 aa).

Residues 1–15 (MSKEDIEGTNILDEP) are Extracellular-facing. Residues 16–36 (VHGIYIPAALFVVGVAITTYM) traverse the membrane as a helical segment. Topologically, residues 37-39 (SGE) are cytoplasmic. Residues 40–60 (LKILWSLPILFMIIFVRAYSA) traverse the membrane as a helical segment. The Extracellular portion of the chain corresponds to 61-179 (YKRRRSLYPD…LNYEPNSSKH (119 aa)). Positions 70–173 (DRWTSLELED…KGPIGTLNYE (104 aa)) constitute an FAD-binding FR-type domain. Residues 153–168 (AGLN…GPIG) and 179–211 (HLGI…KVSL) each bind FAD. A helical membrane pass occupies residues 180-200 (LGIVAGGSGITPVLQILNEII). Residues 201 to 312 (TVPEDLTKVS…SSGDDQVFVF (112 aa)) lie on the Cytoplasmic side of the membrane.

Belongs to the flavoprotein pyridine nucleotide cytochrome reductase family. The cofactor is FAD.

It is found in the cell membrane. Its subcellular location is the endoplasmic reticulum membrane. It catalyses the reaction 2 Fe(III)-[cytochrome b5] + NADH = 2 Fe(II)-[cytochrome b5] + NAD(+) + H(+). With respect to regulation, inhibited by diphenylene iodonium (DPI). NADH-dependent cytochrome b5 reductase that reduces coenzyme Q6 at the plasma membrane and mediates lifespan extension by calorie restriction by shifting fermentative to respiratory metabolism, probably through modulating the NAD(+)/NADH ratio. The protein is Plasma membrane-associated coenzyme Q6 reductase PGA3 (PGA3) of Saccharomyces cerevisiae (strain ATCC 204508 / S288c) (Baker's yeast).